The following is a 120-amino-acid chain: Ribosome-binding factor A (120 aa).

Belongs to the RbfA family. As to quaternary structure, monomer. Binds 30S ribosomal subunits, but not 50S ribosomal subunits or 70S ribosomes.

The protein resides in the cytoplasm. Functionally, one of several proteins that assist in the late maturation steps of the functional core of the 30S ribosomal subunit. Associates with free 30S ribosomal subunits (but not with 30S subunits that are part of 70S ribosomes or polysomes). Required for efficient processing of 16S rRNA. May interact with the 5'-terminal helix region of 16S rRNA. This is Ribosome-binding factor A from Desulforamulus reducens (strain ATCC BAA-1160 / DSM 100696 / MI-1) (Desulfotomaculum reducens).